Reading from the N-terminus, the 1179-residue chain is Dynein axonemal assembly factor 9 (1179 aa).

As to quaternary structure, interacts with ARL3.

In terms of biological role, may act as an effector for ARL3. The sequence is that of Dynein axonemal assembly factor 9 from Mus musculus (Mouse).